The following is a 191-amino-acid chain: uncharacterized protein (191 aa).

Disordered regions lie at residues 1–42 (MSEE…DADA) and 145–191 (QNQE…IDLD). Basic and acidic residues-rich tracts occupy residues 11–26 (PRPDEADAVDETRATG) and 147–178 (QERRWTTGDTAPKDPSDPRDLDERGTDGRDEG).

It may form a heterotetramer of two glucokinase subunits (glk) with two ORF2 proteins.

Functionally, may be involved in glucose transport or metabolism. This is an uncharacterized protein from Streptomyces coelicolor (strain ATCC BAA-471 / A3(2) / M145).